A 203-amino-acid chain; its full sequence is EF-hand calcium-binding domain-containing protein 8 (203 aa).

The tract at residues 61–107 (SSEKPGESPKPQKMAQPGGSQKKETSRSVPVTDPTSHNSEINQRDQQ) is disordered. A compositionally biased stretch (polar residues) spans 87–107 (RSVPVTDPTSHNSEINQRDQQ). EF-hand domains lie at 111–145 (MHLA…VLSS) and 146–181 (MSEE…EFQG).

The sequence is that of EF-hand calcium-binding domain-containing protein 8 (Efcab8) from Mus musculus (Mouse).